We begin with the raw amino-acid sequence, 429 residues long: tRNA (guanine(9)-N1)-methyltransferase (429 aa).

The region spanning 131 to 379 (KERKEAQRRI…AVIPIRKYAP (249 aa)) is the SAM-dependent MTase TRM10-type domain. S-adenosyl-L-methionine contacts are provided by residues 285–286 (LS), G305, 309–313 (DRNRH), C317, L331, and 344–346 (KAL). Catalysis depends on D309, which acts as the Proton acceptor. The tract at residues 383–429 (AKRAKTETKRNEKVEEEVECTSAEGEEDIGVIEESAEVDPEDVFSNQ) is disordered. Residues 386–395 (AKTETKRNEK) are compositionally biased toward basic and acidic residues. Residues 396 to 429 (VEEEVECTSAEGEEDIGVIEESAEVDPEDVFSNQ) are compositionally biased toward acidic residues.

The protein belongs to the class IV-like SAM-binding methyltransferase superfamily. TRM10 family. In terms of assembly, monomer.

The protein localises to the cytoplasm. It is found in the nucleus. The enzyme catalyses guanosine(9) in tRNA + S-adenosyl-L-methionine = N(1)-methylguanosine(9) in tRNA + S-adenosyl-L-homocysteine + H(+). Functionally, S-adenosyl-L-methionine-dependent guanine N(1)-methyltransferase that catalyzes the formation of N(1)-methylguanine at position 9 (m1G9) in cytoplasmic tRNA. The chain is tRNA (guanine(9)-N1)-methyltransferase from Cryptococcus neoformans var. neoformans serotype D (strain B-3501A) (Filobasidiella neoformans).